The sequence spans 869 residues: MRVLSAIALVASLASSALSAPASESRVSTQLRSRDAEGYSSPPYYPAPNGGWLSSWADAYEKAQRVVRDMTLAEKVNLTTGTGIFMGPCVGQTGSALRFGIPNLCLQDSPLGVRNSDHNTAFPAGITVGATFDKDLMYARGVELGKEFRGKGINVLLGPSVGPIGRKPRGGRNWEGFGADPSLQAIGGAQTIKGIQSQGVIATIKHYIGNEQEMYRMSNVGQRAYSSNIDDRTLHEVYLWPFAEGIRAGVGAVMTAYNEVNSSACSQNSKLLNEILKDELGFQGFVMTDWLGQYGGVSSALAGLDMAMPGDGAIPLLGTAYWGSELSRSILNGSVPVSRLNDMVTRIVAAWYKMGQDGEFPLPNFSSNTQDATGPLYPGALFSPSGVVNQYVNVQADHNITARAIARDAITLLKNDDNILPLKKDDALKVFGTDAGPNPDGLNSCADMGCNKGVLTMGWGSGTSRLPYLVTPQEAIANISSNAAFFITDNFPSNVAVSSGDVAVVFISADSGENYITVEGNPGDRTSAGLNAWHNGDKLVKDAAAKFSKVVVVVHTVGPILMEEWIDLPSVKAVLVAHLPGQEAGWSLTDVLFGDYSPSGHLPYTIPRAESDYPSSVGLLSQPIVQIQDTYTEGLYIDYRLFLKANITPRYPFGHGLSYTTFSFSQPTLSVRTALDSTYPPTRPPKGPTPTYPTAIPDPSEVAWPKNFGRIWRYLYPYLDDPASAAKNSSKTYPYPAGYTTVPKPAPRAGGAEGGNPALFDVAFAVSVTVTNTGSRPGRAVAQLYVELPDSLGETPSRQLRQFAKTKTLAPGTSETLTMEITRKDISVWDVVVQDWKAPVRGEGVKIWLGESVLDMRAVCEVGGACRVI.

The signal sequence occupies residues 1–19 (MRVLSAIALVASLASSALS). N-linked (GlcNAc...) asparagine glycosylation is found at N77 and N261. D289 is a catalytic residue. Residues N332, N364, N399, and N478 are each glycosylated (N-linked (GlcNAc...) asparagine). Positions 677–697 (STYPPTRPPKGPTPTYPTAIP) are disordered. The span at 681–691 (PTRPPKGPTPT) shows a compositional bias: pro residues. The N-linked (GlcNAc...) asparagine glycan is linked to N728.

The protein belongs to the glycosyl hydrolase 3 family.

Its subcellular location is the secreted. It catalyses the reaction Hydrolysis of terminal, non-reducing beta-D-glucosyl residues with release of beta-D-glucose.. It participates in glycan metabolism; cellulose degradation. Beta-glucosidases are one of a number of cellulolytic enzymes involved in the degradation of cellulosic biomass. Catalyzes the last step releasing glucose from the inhibitory cellobiose. The sequence is that of Probable beta-glucosidase F (bglF) from Aspergillus fumigatus (strain ATCC MYA-4609 / CBS 101355 / FGSC A1100 / Af293) (Neosartorya fumigata).